Here is a 337-residue protein sequence, read N- to C-terminus: Annexin E1 (337 aa).

Annexin repeat units lie at residues 10 to 80 (TGVT…MLYK), 81 to 154 (PRAQ…AVAT), 161 to 238 (DTHE…LAHD), and 242 to 312 (DPCC…LLWE).

It belongs to the annexin family.

The protein resides in the cell projection. Its subcellular location is the cilium. The protein localises to the flagellum. Its function is as follows. May function as a calcium-regulated structural element linking phospholipid bilayer and underlying axoneme. The chain is Annexin E1 (ANXE1) from Giardia intestinalis (Giardia lamblia).